Here is a 453-residue protein sequence, read N- to C-terminus: Allantoinase (453 aa).

6 residues coordinate Zn(2+): His59, His61, Lys146, His186, His242, and Asp315. Position 146 is an N6-carboxylysine (Lys146).

This sequence belongs to the metallo-dependent hydrolases superfamily. Allantoinase family. In terms of assembly, homotetramer. Zn(2+) is required as a cofactor. In terms of processing, carboxylation allows a single lysine to coordinate two zinc ions.

The enzyme catalyses (S)-allantoin + H2O = allantoate + H(+). The protein operates within nitrogen metabolism; (S)-allantoin degradation; allantoate from (S)-allantoin: step 1/1. In terms of biological role, catalyzes the conversion of allantoin (5-ureidohydantoin) to allantoic acid by hydrolytic cleavage of the five-member hydantoin ring. This Salmonella paratyphi B (strain ATCC BAA-1250 / SPB7) protein is Allantoinase.